A 479-amino-acid polypeptide reads, in one-letter code: Endo-beta-1,6-galactanase (479 aa).

Residues 1-20 (MRSIVLPSLALALFSQRARA) form the signal peptide. Asn89 carries N-linked (GlcNAc...) asparagine glycosylation. The active-site Proton donor is the Glu210. N-linked (GlcNAc...) asparagine glycosylation is present at Asn271. Residue Glu311 is the Nucleophile of the active site. Residue Asn358 is glycosylated (N-linked (GlcNAc...) asparagine).

It carries out the reaction Endohydrolysis of (1-&gt;6)-beta-D-galactosidic linkages in arabinogalactan proteins and (1-&gt;3):(1-&gt;6)-beta-galactans to yield galactose and beta-(1-&gt;6)-galactaobiose as the final products.. Functionally, hydrolyzes galactooligomers with a degree of polymerization higher than 3. Hydrolyzes radish root arabinogalactan-protein. Does not hydrolyze dextran, arabinan, starch, laminarin, beta-1,4- and beta-1,3-galactans, larch wood arabinogalactan or acid-insoluble polygalacturonic acid. This is Endo-beta-1,6-galactanase from Hypocrea rufa (Trichoderma viride).